The following is a 27-amino-acid chain: MFFKWISKFIRRLSKCGIKSITSKAYK.

The protein resides in the plastid. It is found in the chloroplast. This is an uncharacterized protein from Marchantia polymorpha (Common liverwort).